The primary structure comprises 492 residues: Glutamyl-tRNA(Gln) amidotransferase subunit A (492 aa).

Residues lysine 79 and serine 154 each act as charge relay system in the active site. Serine 178 acts as the Acyl-ester intermediate in catalysis.

This sequence belongs to the amidase family. GatA subfamily. As to quaternary structure, heterotrimer of A, B and C subunits.

The catalysed reaction is L-glutamyl-tRNA(Gln) + L-glutamine + ATP + H2O = L-glutaminyl-tRNA(Gln) + L-glutamate + ADP + phosphate + H(+). Its function is as follows. Allows the formation of correctly charged Gln-tRNA(Gln) through the transamidation of misacylated Glu-tRNA(Gln) in organisms which lack glutaminyl-tRNA synthetase. The reaction takes place in the presence of glutamine and ATP through an activated gamma-phospho-Glu-tRNA(Gln). This chain is Glutamyl-tRNA(Gln) amidotransferase subunit A, found in Desulforudis audaxviator (strain MP104C).